A 36-amino-acid chain; its full sequence is Photosystem I reaction center subunit VIII (36 aa).

Residues 9–29 (ILVPLVGLIFPAFSMALFFLY) traverse the membrane as a helical segment.

The protein belongs to the PsaI family.

It is found in the plastid. The protein localises to the chloroplast thylakoid membrane. Functionally, may help in the organization of the PsaL subunit. In Thalassiosira pseudonana (Marine diatom), this protein is Photosystem I reaction center subunit VIII.